The primary structure comprises 75 residues: Supwaprin-a (75 aa).

The first 24 residues, 1 to 24 (MSSGGLLLLLGFLTLWAELTPVSG), serve as a signal peptide directing secretion. The WAP domain occupies 27 to 72 (RPKKPGLCPPRPQKPPCVRECKNDWSCPGEQKCCRYGCIFECRDPI). 4 disulfide bridges follow: Cys-34-Cys-60, Cys-43-Cys-64, Cys-47-Cys-59, and Cys-53-Cys-68.

It belongs to the venom waprin family. As to expression, expressed by the venom gland.

It is found in the secreted. Damages membranes of susceptible bacteria. Has no hemolytic activity. Not toxic to mice. Does not inhibit the proteinases elastase and cathepsin G. The sequence is that of Supwaprin-a from Austrelaps superbus (Lowland copperhead snake).